Consider the following 147-residue polypeptide: Large ribosomal subunit protein bL9 (147 aa).

This sequence belongs to the bacterial ribosomal protein bL9 family.

Functionally, binds to the 23S rRNA. This chain is Large ribosomal subunit protein bL9, found in Nitratiruptor sp. (strain SB155-2).